A 736-amino-acid polypeptide reads, in one-letter code: Gephyrin (736 aa).

The segment at 14–153 is MPT Mo-transferase; that stretch reads QIRVGVLTVS…LPGSKKGSQE (140 aa). Disordered stretches follow at residues 181–232 and 260–290; these read DELE…DSSS and TASLSTTPSESPRAQATSRLSTASCPTPKVQ. A compositionally biased stretch (pro residues) spans 187 to 199; that stretch reads PSPPPPLSPPPTT. A compositionally biased stretch (polar residues) spans 261–290; the sequence is ASLSTTPSESPRAQATSRLSTASCPTPKVQ. Residues 294-736 are MPT adenylyltransferase; sequence SSKENILRAS…VVDVMVIGRL (443 aa).

In the N-terminal section; belongs to the MoaB/Mog family. The protein in the C-terminal section; belongs to the MoeA family. Homotrimer, homodimer and homooligomer. Interacts with glycine receptors. Mg(2+) serves as cofactor.

The protein resides in the postsynaptic cell membrane. Its subcellular location is the cell membrane. It localises to the cytoplasm. The protein localises to the cytosol. It is found in the cytoskeleton. The protein resides in the cell projection. Its subcellular location is the dendrite. It localises to the postsynaptic density. The catalysed reaction is molybdopterin + ATP + H(+) = adenylyl-molybdopterin + diphosphate. It carries out the reaction adenylyl-molybdopterin + molybdate = Mo-molybdopterin + AMP + H(+). Its pathway is cofactor biosynthesis; molybdopterin biosynthesis. In terms of biological role, microtubule-associated protein involved in membrane protein-cytoskeleton interactions. It is thought to anchor the inhibitory glycine receptor (GLYR) to subsynaptic microtubules. Acts as a major instructive molecule at inhibitory synapses, where it also clusters GABA type A receptors. Also has a catalytic activity and catalyzes two steps in the biosynthesis of the molybdenum cofactor. In the first step, molybdopterin is adenylated. Subsequently, molybdate is inserted into adenylated molybdopterin and AMP is released. This chain is Gephyrin (GPHN), found in Gallus gallus (Chicken).